The primary structure comprises 738 residues: Outer membrane protein assembly factor BamA (738 aa).

Positions 1 to 13 (MVWLLFLSSFCFA) are cleaved as a signal peptide. POTRA domains are found at residues 14–81 (DEVV…LQEN), 82–159 (PILR…VKEA), 162–248 (TVIR…LKEG), 251–329 (YSFG…VVST), and 332–404 (YRIR…VKER).

The protein belongs to the BamA family. In terms of assembly, part of the Bam complex.

The protein localises to the cell outer membrane. In terms of biological role, part of the outer membrane protein assembly complex, which is involved in assembly and insertion of beta-barrel proteins into the outer membrane. This Neorickettsia risticii (strain Illinois) protein is Outer membrane protein assembly factor BamA.